The following is a 299-amino-acid chain: ATP phosphoribosyltransferase (299 aa).

This sequence belongs to the ATP phosphoribosyltransferase family. Long subfamily. Equilibrium between an active dimeric form, an inactive hexameric form and higher aggregates. Interconversion between the various forms is largely reversible and is influenced by the natural substrates and inhibitors of the enzyme. Mg(2+) serves as cofactor.

It localises to the cytoplasm. It carries out the reaction 1-(5-phospho-beta-D-ribosyl)-ATP + diphosphate = 5-phospho-alpha-D-ribose 1-diphosphate + ATP. Its pathway is amino-acid biosynthesis; L-histidine biosynthesis; L-histidine from 5-phospho-alpha-D-ribose 1-diphosphate: step 1/9. Its activity is regulated as follows. Feedback inhibited by histidine. Its function is as follows. Catalyzes the condensation of ATP and 5-phosphoribose 1-diphosphate to form N'-(5'-phosphoribosyl)-ATP (PR-ATP). Has a crucial role in the pathway because the rate of histidine biosynthesis seems to be controlled primarily by regulation of HisG enzymatic activity. The polypeptide is ATP phosphoribosyltransferase (Buchnera aphidicola subsp. Schlechtendalia chinensis).